The primary structure comprises 439 residues: Exodeoxyribonuclease 7 large subunit (439 aa).

This sequence belongs to the XseA family. Heterooligomer composed of large and small subunits.

Its subcellular location is the cytoplasm. It catalyses the reaction Exonucleolytic cleavage in either 5'- to 3'- or 3'- to 5'-direction to yield nucleoside 5'-phosphates.. Bidirectionally degrades single-stranded DNA into large acid-insoluble oligonucleotides, which are then degraded further into small acid-soluble oligonucleotides. The sequence is that of Exodeoxyribonuclease 7 large subunit from Haemophilus influenzae (strain ATCC 51907 / DSM 11121 / KW20 / Rd).